The sequence spans 297 residues: Homoserine kinase (297 aa).

82 to 92 (PVSRGLGSSAA) contacts ATP.

Belongs to the GHMP kinase family. Homoserine kinase subfamily.

Its subcellular location is the cytoplasm. It catalyses the reaction L-homoserine + ATP = O-phospho-L-homoserine + ADP + H(+). It participates in amino-acid biosynthesis; L-threonine biosynthesis; L-threonine from L-aspartate: step 4/5. Catalyzes the ATP-dependent phosphorylation of L-homoserine to L-homoserine phosphate. The polypeptide is Homoserine kinase (Clostridium botulinum (strain 657 / Type Ba4)).